The sequence spans 156 residues: MTIFEKKPDFTLFLQTLSWEIDDQVGIEVRNELLREVGRGMGTRIMPPPCQTVDKLQIELNALLALIGWGTVTLELLSEDQSLRIVHENLPQVGSAGEPSGTWLAPVLEGLYGRWVTSQAGAFGDYVVTRDVDAEDLNAVPRQTIIMYMRVRSSAT.

It functions in the pathway glycan metabolism; bacterial cellulose biosynthesis. In terms of biological role, may have a major role in the perfection of crystallization, involved either in the pore structure itself or in the organization of the pores within the linear array of terminal synthesizing complexes (TCs). The chain is Cellulose synthase operon protein D (acsD) from Komagataeibacter xylinus (Gluconacetobacter xylinus).